We begin with the raw amino-acid sequence, 88 residues long: Meiosis-expressed gene 1 protein (88 aa).

The protein belongs to the MEIG1 family. In terms of assembly, interacts with PACRG. Interacts with MORN3. As to expression, expressed in the testes (at protein level). Expressed in the ovary. Several isoforms have been identified differing in their 5'-untranslated exons. These isoforms show different tissue expression. Some are expressed in various tissues, including lung, liver, brain, testis, oviduct and oocytes. Some are testis-specific.

Functionally, essential for spermiogenesis. This chain is Meiosis-expressed gene 1 protein, found in Mus musculus (Mouse).